Reading from the N-terminus, the 221-residue chain is Cysteine protease inhibitor 8 (221 aa).

The N-terminal stretch at 1–26 (IPSINILSFLLLSSTLSLVAFARSFT) is a signal peptide. A propeptide spanning residues 27–42 (SENPIVLPTTCHDDDN) is cleaved from the precursor. Positions 29-34 (NPIVLP) match the Vacuolar targeting signal motif. 2 cysteine pairs are disulfide-bonded: C84-C136 and C184-C190.

Belongs to the protease inhibitor I3 (leguminous Kunitz-type inhibitor) family.

Its subcellular location is the vacuole. In terms of biological role, inhibitor of cysteine proteases. May protect the plant by inhibiting proteases of invading organisms. In Solanum tuberosum (Potato), this protein is Cysteine protease inhibitor 8.